The sequence spans 361 residues: G kinase-anchoring protein 1-A (361 aa).

Disordered stretches follow at residues 22-111 (DSSS…EDWQ) and 140-183 (FEES…KDFQ). A compositionally biased stretch (low complexity) spans 35–48 (AHSSGKAHSGSAAR). The stretch at 51–79 (NKGNEKKKEKRRKKKEQQQSEANELRNLA) forms a coiled coil. Basic residues predominate over residues 158–168 (KVNKKDKRKNN). Coiled coils occupy residues 246 to 296 (KDGR…QEGE) and 326 to 346 (AALE…VKYQ).

The protein belongs to the GKAP1 family.

It is found in the golgi apparatus. May play a role in the regulation of insulin-dependent IRS1 tyrosine phosphorylation in adipocytes. The sequence is that of G kinase-anchoring protein 1-A (gkap1-a) from Xenopus laevis (African clawed frog).